The sequence spans 399 residues: Acetate kinase 2 (399 aa).

Asn10 provides a ligand contact to Mg(2+). Lys17 is a binding site for ATP. Residue Arg89 coordinates substrate. The Proton donor/acceptor role is filled by Asp146. ATP is bound by residues 206–210 (HLGNG), 281–283 (DCR), and 329–333 (GIGEN). A Mg(2+)-binding site is contributed by Glu384.

This sequence belongs to the acetokinase family. Homodimer. Mg(2+) serves as cofactor. The cofactor is Mn(2+).

The protein localises to the cytoplasm. The catalysed reaction is acetate + ATP = acetyl phosphate + ADP. It participates in metabolic intermediate biosynthesis; acetyl-CoA biosynthesis; acetyl-CoA from acetate: step 1/2. Its function is as follows. Catalyzes the formation of acetyl phosphate from acetate and ATP. Can also catalyze the reverse reaction. The protein is Acetate kinase 2 of Neisseria meningitidis serogroup A / serotype 4A (strain DSM 15465 / Z2491).